Consider the following 286-residue polypeptide: Pantothenate synthetase (286 aa).

30–37 (MGNLHAGH) serves as a coordination point for ATP. Histidine 37 functions as the Proton donor in the catalytic mechanism. Residue glutamine 61 coordinates (R)-pantoate. Glutamine 61 provides a ligand contact to beta-alanine. 149–152 (GEKD) contacts ATP. Glutamine 155 serves as a coordination point for (R)-pantoate. Residues valine 178 and 186–189 (MSSR) contribute to the ATP site.

The protein belongs to the pantothenate synthetase family. In terms of assembly, homodimer.

The protein localises to the cytoplasm. The enzyme catalyses (R)-pantoate + beta-alanine + ATP = (R)-pantothenate + AMP + diphosphate + H(+). Its pathway is cofactor biosynthesis; (R)-pantothenate biosynthesis; (R)-pantothenate from (R)-pantoate and beta-alanine: step 1/1. Catalyzes the condensation of pantoate with beta-alanine in an ATP-dependent reaction via a pantoyl-adenylate intermediate. In Thioalkalivibrio sulfidiphilus (strain HL-EbGR7), this protein is Pantothenate synthetase.